We begin with the raw amino-acid sequence, 134 residues long: Large ribosomal subunit protein uL16 (134 aa).

Residues 1-20 (MLLQPKRTKFRKMHKGRNRG) show a composition bias toward basic residues. The segment at 1-21 (MLLQPKRTKFRKMHKGRNRGT) is disordered.

It belongs to the universal ribosomal protein uL16 family. In terms of assembly, part of the 50S ribosomal subunit.

Functionally, binds 23S rRNA and is also seen to make contacts with the A and possibly P site tRNAs. The protein is Large ribosomal subunit protein uL16 of Blochmanniella pennsylvanica (strain BPEN).